Consider the following 207-residue polypeptide: MKPLTARQQEVFELIKAKIEDTGMPPTRAEIARELGFRSANAAEEHLKALARKQAIEIIPGASRGIRILLQDPVEPEDLGLPLIGQVAAGEPILAQEHVESHYQVDPSMFKPQADFLLRVNGESMKNIGIMDGDLLAVHKTQDVHDGQVVVARVDDDVTVKRLERKGSMVFLHAENEEFAPIQVDLTSQHLSIEGIAVGVIRSTTWM.

The segment at residues 28–48 (RAEIARELGFRSANAAEEHLK) is a DNA-binding region (H-T-H motif). Residues Ser-124 and Lys-161 each act as for autocatalytic cleavage activity in the active site.

This sequence belongs to the peptidase S24 family. Homodimer.

The catalysed reaction is Hydrolysis of Ala-|-Gly bond in repressor LexA.. In terms of biological role, represses a number of genes involved in the response to DNA damage (SOS response), including recA and lexA. In the presence of single-stranded DNA, RecA interacts with LexA causing an autocatalytic cleavage which disrupts the DNA-binding part of LexA, leading to derepression of the SOS regulon and eventually DNA repair. This is LexA repressor from Aliivibrio salmonicida (strain LFI1238) (Vibrio salmonicida (strain LFI1238)).